The following is a 521-amino-acid chain: GMP synthase [glutamine-hydrolyzing] (521 aa).

The 196-residue stretch at 8–203 (KILILDFGAQ…VVDVCGCQTL (196 aa)) folds into the Glutamine amidotransferase type-1 domain. Cys-85 serves as the catalytic Nucleophile. Active-site residues include His-177 and Glu-179. The region spanning 204–396 (WTAANIIDDQ…LGLPRTMVYR (193 aa)) is the GMPS ATP-PPase domain. 231-237 (SGGVDSS) is an ATP binding site.

In terms of assembly, homodimer.

It carries out the reaction XMP + L-glutamine + ATP + H2O = GMP + L-glutamate + AMP + diphosphate + 2 H(+). It participates in purine metabolism; GMP biosynthesis; GMP from XMP (L-Gln route): step 1/1. In terms of biological role, catalyzes the synthesis of GMP from XMP. In Xanthomonas campestris pv. campestris (strain B100), this protein is GMP synthase [glutamine-hydrolyzing].